We begin with the raw amino-acid sequence, 276 residues long: Protein-glutamine gamma-glutamyltransferase (276 aa).

Belongs to the bacillus TGase family.

The enzyme catalyses L-glutaminyl-[protein] + L-lysyl-[protein] = [protein]-L-lysyl-N(6)-5-L-glutamyl-[protein] + NH4(+). Functionally, probably plays a role in the assembly of the spore coat proteins by catalyzing epsilon-(gamma-glutamyl)lysine cross-links. The sequence is that of Protein-glutamine gamma-glutamyltransferase from Bacillus anthracis (strain A0248).